A 502-amino-acid chain; its full sequence is Cytochrome P450 monooxygenase prhN (502 aa).

A helical membrane pass occupies residues 14–30 (SGALLIVGILLLRWALW). N165 carries N-linked (GlcNAc...) asparagine glycosylation. C443 lines the heme pocket. N-linked (GlcNAc...) asparagine glycosylation is present at N474.

Belongs to the cytochrome P450 family. Heme is required as a cofactor.

Its subcellular location is the membrane. It participates in secondary metabolite biosynthesis; terpenoid biosynthesis. In terms of biological role, cytochrome P450 monooxygenase; part of the gene cluster that mediates the biosynthesis of paraherquonin, a meroterpenoid with a unique, highly congested hexacyclic molecular architecture. The first step of the pathway is the synthesis of 3,5-dimethylorsellinic acid (DMOA) by the polyketide synthase prhL. Synthesis of DMOA is followed by farnesylation by the prenyltransferase prhE, methylesterification by the methyl-transferase prhM, epoxidation of the prenyl chain by the flavin-dependent monooxygenase prhF, and cyclization of the farnesyl moiety by the terpene cyclase prhH, to yield the tetracyclic intermediate, protoaustinoid A. The short chain dehydrogenase prhI then oxidizes the C-3 alcohol group of the terpene cyclase product to transform protoaustinoid A into protoaustinoid B. The FAD-binding monooxygenase prhJ catalyzes the oxidation of protoaustinoid B into preaustinoid A which is further oxidized into preaustinoid A1 by FAD-binding monooxygenase phrK. Finally, prhA leads to berkeleydione via the berkeleyone B intermediate. PrhA is a multifunctional dioxygenase that first desaturates at C5-C6 to form berkeleyone B, followed by rearrangement of the A/B-ring to form the cycloheptadiene moiety in berkeleydione. Berkeleydione serves as the key intermediate for the biosynthesis of paraherquonin as well as many other meroterpenoids. The cytochrome P450 monooxygenases prhB, prhD, and prhN, as well as the isomerase prhC, are probably involved in the late stage of paraherquonin biosynthesis, after the production of berkeleydione. Especially prhC might be a multifunctional enzyme that catalyzes the D-ring expansion via intramolecular methoxy rearrangement, as well as the hydrolysis of the expanded D-ring. The chain is Cytochrome P450 monooxygenase prhN from Penicillium brasilianum.